The following is a 64-amino-acid chain: Conotoxin VnMLCL-05 (64 aa).

The N-terminal stretch at 1–19 (MLCLPVFIILLLLASPAAP) is a signal peptide. A propeptide spanning residues 20-43 (NPLQTRIQSNLIRAGPEDANIKTD) is cleaved from the precursor. Position 63 is a lysine amide (Lys-63).

It belongs to the conotoxin T superfamily. In terms of tissue distribution, expressed by the venom duct.

The protein localises to the secreted. The protein is Conotoxin VnMLCL-05 of Conus ventricosus (Mediterranean cone).